A 2397-amino-acid chain; its full sequence is Cell wall alpha-1,3-glucan synthase mok11 (2397 aa).

Residues Ser-1683–Val-1705 are disordered. Residues Ser-1687–Phe-1698 are compositionally biased toward low complexity.

The protein belongs to the glycosyltransferase group 1 family.

It carries out the reaction [(1-&gt;3)-alpha-D-glucosyl](n) + UDP-alpha-D-glucose = [(1-&gt;3)-alpha-D-glucosyl](n+1) + UDP + H(+). The sequence is that of Cell wall alpha-1,3-glucan synthase mok11 (mok11) from Schizosaccharomyces pombe (strain 972 / ATCC 24843) (Fission yeast).